The sequence spans 479 residues: Cardiolipin synthase A (479 aa).

Helical transmembrane passes span Phe8–Val28 and Ile38–Phe58. PLD phosphodiesterase domains follow at residues Val218–Tyr245 and Gln392–Ser419. Active-site residues include His223, Lys225, Asp230, His397, Lys399, and Asp404.

The protein belongs to the phospholipase D family. Cardiolipin synthase subfamily. ClsA sub-subfamily.

The protein resides in the cell inner membrane. The catalysed reaction is 2 a 1,2-diacyl-sn-glycero-3-phospho-(1'-sn-glycerol) = a cardiolipin + glycerol. In terms of biological role, catalyzes the reversible phosphatidyl group transfer from one phosphatidylglycerol molecule to another to form cardiolipin (CL) (diphosphatidylglycerol) and glycerol. This is Cardiolipin synthase A from Pseudomonas putida (strain W619).